The chain runs to 202 residues: Small ribosomal subunit protein uS4c (202 aa).

The region spanning 90 to 153 is the S4 RNA-binding domain; it reads MRLDNVIFRL…KSEAIISKNI (64 aa).

This sequence belongs to the universal ribosomal protein uS4 family. Part of the 30S ribosomal subunit. Contacts protein S5. The interaction surface between S4 and S5 is involved in control of translational fidelity.

Its subcellular location is the plastid. The protein resides in the chloroplast. In terms of biological role, one of the primary rRNA binding proteins, it binds directly to 16S rRNA where it nucleates assembly of the body of the 30S subunit. With S5 and S12 plays an important role in translational accuracy. The protein is Small ribosomal subunit protein uS4c (rps4) of Hypopterygium laricinum (Moss).